The chain runs to 299 residues: Transcription elongation factor A protein 2 (299 aa).

A TFIIS N-terminal domain is found at 5 to 82; it reads EEIARIARRL…KSWKKLLDVS (78 aa). A Glycyl lysine isopeptide (Lys-Gly) (interchain with G-Cter in ubiquitin) cross-link involves residue lysine 57. Residues serine 59 and serine 100 each carry the phosphoserine modification. The interval 82–127 is disordered; sequence SDGKSRNQGRGTPLPTSSSKDASRTTDLSCKKPDPPRTPSTPRITT. Polar residues predominate over residues 87-101; sequence RNQGRGTPLPTSSSK. Residues 102–116 show a composition bias toward basic and acidic residues; the sequence is DASRTTDLSCKKPDP. Residues 138–254 enclose the TFIIS central domain; that stretch reads VRNKCREMLT…EHQMARTGGT (117 aa). The TFIIS-type zinc-finger motif lies at 257–297; that stretch reads DLFTCNKCRKKNCTYTQVQTRSSDEPMTTYVVCNECGNRWK. Zn(2+) is bound by residues cysteine 261, cysteine 264, cysteine 289, and cysteine 292.

Belongs to the TFS-II family. Interacts with the basal transcription factor GTF2B. Interacts with REXO1. As to expression, testis and ovary specific. Specific to testicular germ cells.

The protein localises to the nucleus. Its function is as follows. Necessary for efficient RNA polymerase II transcription elongation past template-encoded arresting sites. The arresting sites in DNA have the property of trapping a certain fraction of elongating RNA polymerases that pass through, resulting in locked ternary complexes. Cleavage of the nascent transcript by S-II allows the resumption of elongation from the new 3'-terminus. The chain is Transcription elongation factor A protein 2 (Tcea2) from Mus musculus (Mouse).